Consider the following 268-residue polypeptide: Malonyl-[acyl-carrier protein] O-methyltransferase 1 (268 aa).

The protein belongs to the methyltransferase superfamily.

It catalyses the reaction malonyl-[ACP] + S-adenosyl-L-methionine = malonyl-[ACP] methyl ester + S-adenosyl-L-homocysteine. It functions in the pathway cofactor biosynthesis; biotin biosynthesis. Converts the free carboxyl group of a malonyl-thioester to its methyl ester by transfer of a methyl group from S-adenosyl-L-methionine (SAM). It allows to synthesize pimeloyl-ACP via the fatty acid synthetic pathway. The sequence is that of Malonyl-[acyl-carrier protein] O-methyltransferase 1 from Ilyobacter polytropus (strain ATCC 51220 / DSM 2926 / LMG 16218 / CuHBu1).